We begin with the raw amino-acid sequence, 169 residues long: Putative phosphoesterase SACOL1020 (169 aa).

Histidine 34 acts as the Proton donor in catalysis. 2 consecutive short sequence motifs (HXTX) follow at residues 34 to 37 and 115 to 118; these read HVTI and HFTI. Histidine 115 (proton acceptor) is an active-site residue.

The protein belongs to the 2H phosphoesterase superfamily. YjcG family.

This Staphylococcus aureus (strain COL) protein is Putative phosphoesterase SACOL1020.